Reading from the N-terminus, the 331-residue chain is UPF0324 membrane protein SAR0338 (331 aa).

11 helical membrane-spanning segments follow: residues 9 to 26, 31 to 48, 69 to 88, 93 to 115, 122 to 144, 154 to 176, 183 to 202, 217 to 234, 247 to 269, 273 to 295, and 308 to 330; these read FMIG…SFLA, ILDK…AILY, LLRF…DIIG, LLAI…NKLL, ALLL…APIF, SIGI…YAIF, YGAW…LAGG, LGRV…ILIM, ISIP…VTIP, LNIL…GLNV, and LMTI…HWLY.

Belongs to the UPF0324 family.

Its subcellular location is the cell membrane. This is UPF0324 membrane protein SAR0338 from Staphylococcus aureus (strain MRSA252).